The chain runs to 99 residues: Ubiquitin-related modifier 1 homolog (99 aa).

Gly-99 bears the 1-thioglycine mark. Gly-99 is covalently cross-linked (Glycyl lysine isopeptide (Gly-Lys) (interchain with K-? in acceptor proteins)).

It belongs to the URM1 family. Interacts with cer. C-terminal thiocarboxylation occurs in 2 steps, it is first acyl-adenylated (-COAMP) via the hesA/moeB/thiF part of the MOCS3 homolog, then thiocarboxylated (-COSH) via the rhodanese domain of the MOCS3 homolog.

It localises to the cytoplasm. It participates in tRNA modification; 5-methoxycarbonylmethyl-2-thiouridine-tRNA biosynthesis. Its function is as follows. Acts as a sulfur carrier required for 2-thiolation of mcm(5)S(2)U at tRNA wobble positions of cytosolic tRNA(Lys), tRNA(Glu) and tRNA(Gln). Serves as sulfur donor in tRNA 2-thiolation reaction by being thiocarboxylated (-COSH) at its C-terminus by MOCS3. The sulfur is then transferred to tRNA to form 2-thiolation of mcm(5)S(2)U. Also acts as a ubiquitin-like protein (UBL) that is covalently conjugated via an isopeptide bond to lysine residues of target proteins such as Prx2/Jafrac1, Ciao1, Eip71CD and GILT1. The thiocarboxylated form serves as substrate for conjugation and oxidative stress specifically induces the formation of UBL-protein conjugates. The polypeptide is Ubiquitin-related modifier 1 homolog (Drosophila virilis (Fruit fly)).